The chain runs to 311 residues: tRNA pseudouridine synthase B (311 aa).

Asp49 serves as the catalytic Nucleophile.

The protein belongs to the pseudouridine synthase TruB family. Type 1 subfamily.

The catalysed reaction is uridine(55) in tRNA = pseudouridine(55) in tRNA. In terms of biological role, responsible for synthesis of pseudouridine from uracil-55 in the psi GC loop of transfer RNAs. The chain is tRNA pseudouridine synthase B from Rhizobium meliloti (strain 1021) (Ensifer meliloti).